Consider the following 404-residue polypeptide: Exodeoxyribonuclease 7 large subunit (404 aa).

This sequence belongs to the XseA family. As to quaternary structure, heterooligomer composed of large and small subunits.

It is found in the cytoplasm. It carries out the reaction Exonucleolytic cleavage in either 5'- to 3'- or 3'- to 5'-direction to yield nucleoside 5'-phosphates.. Functionally, bidirectionally degrades single-stranded DNA into large acid-insoluble oligonucleotides, which are then degraded further into small acid-soluble oligonucleotides. The sequence is that of Exodeoxyribonuclease 7 large subunit from Tropheryma whipplei (strain TW08/27) (Whipple's bacillus).